Here is a 122-residue protein sequence, read N- to C-terminus: Large ribosomal subunit protein uL14 (122 aa).

The protein belongs to the universal ribosomal protein uL14 family. Part of the 50S ribosomal subunit. Forms a cluster with proteins L3 and L19. In the 70S ribosome, L14 and L19 interact and together make contacts with the 16S rRNA in bridges B5 and B8.

In terms of biological role, binds to 23S rRNA. Forms part of two intersubunit bridges in the 70S ribosome. In Elusimicrobium minutum (strain Pei191), this protein is Large ribosomal subunit protein uL14.